The chain runs to 371 residues: Histidinol-phosphate aminotransferase (371 aa).

N6-(pyridoxal phosphate)lysine is present on K221.

This sequence belongs to the class-II pyridoxal-phosphate-dependent aminotransferase family. Histidinol-phosphate aminotransferase subfamily. Homodimer. Pyridoxal 5'-phosphate serves as cofactor.

It carries out the reaction L-histidinol phosphate + 2-oxoglutarate = 3-(imidazol-4-yl)-2-oxopropyl phosphate + L-glutamate. The protein operates within amino-acid biosynthesis; L-histidine biosynthesis; L-histidine from 5-phospho-alpha-D-ribose 1-diphosphate: step 7/9. This is Histidinol-phosphate aminotransferase from Pseudoalteromonas atlantica (strain T6c / ATCC BAA-1087).